Consider the following 82-residue polypeptide: Sulfur carrier protein TusA (82 aa).

Cys-20 serves as the catalytic Cysteine persulfide intermediate.

This sequence belongs to the sulfur carrier protein TusA family.

The protein localises to the cytoplasm. Its function is as follows. Sulfur carrier protein which probably makes part of a sulfur-relay system. This is Sulfur carrier protein TusA from Aeromonas hydrophila subsp. hydrophila (strain ATCC 7966 / DSM 30187 / BCRC 13018 / CCUG 14551 / JCM 1027 / KCTC 2358 / NCIMB 9240 / NCTC 8049).